The following is a 91-amino-acid chain: Small ribosomal subunit protein uS15 (91 aa).

Belongs to the universal ribosomal protein uS15 family. In terms of assembly, part of the 30S ribosomal subunit. Forms a bridge to the 50S subunit in the 70S ribosome, contacting the 23S rRNA.

Functionally, one of the primary rRNA binding proteins, it binds directly to 16S rRNA where it helps nucleate assembly of the platform of the 30S subunit by binding and bridging several RNA helices of the 16S rRNA. Its function is as follows. Forms an intersubunit bridge (bridge B4) with the 23S rRNA of the 50S subunit in the ribosome. In Rickettsia peacockii (strain Rustic), this protein is Small ribosomal subunit protein uS15.